A 1302-amino-acid polypeptide reads, in one-letter code: Regulator of telomere elongation helicase 1 (1302 aa).

The Helicase ATP-binding domain maps to 7 to 297; that stretch reads NGVTVDFPFQ…TKTAQQGEPH (291 aa). 42 to 49 provides a ligand contact to ATP; sequence SHTGTGKT. [4Fe-4S] cluster is bound by residues cysteine 146, cysteine 164, cysteine 173, and cysteine 208. Positions 152–168 match the Nuclear localization signal motif; sequence KKQESNHIQIHLCRKKV. A DEAH box motif is present at residues 251–254; sequence DEAH. The segment covering 758 to 767 has biased composition (low complexity); the sequence is PAPAPRATAP. The disordered stretch occupies residues 758 to 819; the sequence is PAPAPRATAP…AAGDPESSLC (62 aa). Positions 770 to 780 are enriched in basic and acidic residues; sequence REGEDAVREVK. A Nuclear localization signal motif is present at residues 873-879; it reads PRGGRKK. 4 disordered regions span residues 981–1006, 1019–1058, 1134–1153, and 1160–1234; these read RPEHSIPRRQPAQPVLDPTGRTAPDP, DPREHLNQGRPHLSPRPPPTGDPGSHPQWRSGVPRAGKQG, CTDLTGRPYPGMERPGPQEE, and VLTH…QAAG. The span at 1178–1187 shows a compositional bias: polar residues; sequence KTQSKISSLL. The short motif at 1180-1187 is the PIP-box element; the sequence is QSKISSLL.

It belongs to the helicase family. RAD3/XPD subfamily. Interacts with TERF1. Interacts (via PIP-box) with PCNA; the interaction is direct and essential for suppressing telomere fragility. Interacts with MMS19; the interaction mediates the association of RTEL1 with the cytosolic iron-sulfur protein assembly (CIA) complex.

The protein localises to the nucleus. The enzyme catalyses ATP + H2O = ADP + phosphate + H(+). A probable ATP-dependent DNA helicase implicated in telomere-length regulation, DNA repair and the maintenance of genomic stability. Acts as an anti-recombinase to counteract toxic recombination and limit crossover during meiosis. Regulates meiotic recombination and crossover homeostasis by physically dissociating strand invasion events and thereby promotes noncrossover repair by meiotic synthesis dependent strand annealing (SDSA) as well as disassembly of D loop recombination intermediates. Also disassembles T loops and prevents telomere fragility by counteracting telomeric G4-DNA structures, which together ensure the dynamics and stability of the telomere. The chain is Regulator of telomere elongation helicase 1 from Pongo abelii (Sumatran orangutan).